The chain runs to 458 residues: Probable asparagine--tRNA ligase, cytoplasmic (458 aa).

It belongs to the class-II aminoacyl-tRNA synthetase family.

It is found in the cytoplasm. It carries out the reaction tRNA(Asn) + L-asparagine + ATP = L-asparaginyl-tRNA(Asn) + AMP + diphosphate + H(+). This chain is Probable asparagine--tRNA ligase, cytoplasmic, found in Enterocytozoon bieneusi (strain H348) (Microsporidian parasite).